The chain runs to 660 residues: MSIKIQQEIEDLKKLIRKWDKEYYVDSLPSVEDFVYDNHILRLKELESRHPEYKTLDSPTLKFGSDLLNNFEEVEHSVPILSLDKVYDLDLLKSWIDKIDFNNSFNISVEPKIDGCSIVLYYKDGILEKALTRGNGKFGNDVTKNIRTIRHIPLFLDEKVDLVLRGEVYITKENFFKINKFLEKPYTSSRNLASGILRRVDSREVANFPLNIFIYDFLNAELELKTNDLAIAKLKKLGFKVDPLIRFFDQKSSIIEVLNYIADITKKRNSFEYEIDGVVLKVSEFVLREKLGYTSHHPKWAMAYKFEALSGFSRVNSIVVQVGRSGKITPVANIDKVFVSGAFITNATLHNQDYIISIGLNVGDVVKVSRRGDVIPAVEMVINKCSKGVFKVPDNCPACKTVLVKEGAHFFCTNNSCPSVAVERIKYFCSKNCMDIEGFSDKTISFLFEKEFISSEIDLYTFNFYKLLKFKGFKDRKVYNLINSIEASKKKPFSKLLLSIGIKELGENAIRLLFLNNLNSFSKLFRLCQDRNFAFSTLLKIKGIGEKIALNIIEAFNDSTMLNKFKFFENLGFKMEESILIDDENRLLAGKKFCITGTFNGYSRSIIIDKLKNKGAIFKTCVTEGLDFLIVGEKAGSKLEKALNLNVKIMSFEDIKSYLN.

Residues 33–37, 82–83, and Glu110 each bind NAD(+); these read DFVYD and SL. The N6-AMP-lysine intermediate role is filled by Lys112. NAD(+) contacts are provided by Arg133, Glu167, Lys281, and Lys305. The Zn(2+) site is built by Cys396, Cys399, Cys412, and Cys417. Residues 583–660 enclose the BRCT domain; it reads DENRLLAGKK…SFEDIKSYLN (78 aa).

This sequence belongs to the NAD-dependent DNA ligase family. LigA subfamily. Requires Mg(2+) as cofactor. Mn(2+) is required as a cofactor.

The enzyme catalyses NAD(+) + (deoxyribonucleotide)n-3'-hydroxyl + 5'-phospho-(deoxyribonucleotide)m = (deoxyribonucleotide)n+m + AMP + beta-nicotinamide D-nucleotide.. Its function is as follows. DNA ligase that catalyzes the formation of phosphodiester linkages between 5'-phosphoryl and 3'-hydroxyl groups in double-stranded DNA using NAD as a coenzyme and as the energy source for the reaction. It is essential for DNA replication and repair of damaged DNA. The chain is DNA ligase from Borrelia garinii subsp. bavariensis (strain ATCC BAA-2496 / DSM 23469 / PBi) (Borreliella bavariensis).